The primary structure comprises 157 residues: Small ribosomal subunit protein uS7 (157 aa).

The protein belongs to the universal ribosomal protein uS7 family. As to quaternary structure, part of the 30S ribosomal subunit. Contacts proteins S9 and S11.

Its function is as follows. One of the primary rRNA binding proteins, it binds directly to 16S rRNA where it nucleates assembly of the head domain of the 30S subunit. Is located at the subunit interface close to the decoding center, probably blocks exit of the E-site tRNA. This is Small ribosomal subunit protein uS7 from Delftia acidovorans (strain DSM 14801 / SPH-1).